The primary structure comprises 170 residues: MMAGMKIQLVCMLLLAFSSWSLCSDSEEEMKALEADFLTNMHTSKISKAHVPSWKMTLLNVCSLVNNLNSPAEETGEVHEEELVARRKLPTALDGFSLEAMLTIYQLHKICHSRAFQHWELIQEDILDTGNDKNGKEEVIKRKIPYILKRQLYENKPRRPYILKRDSYYY.

Residues 1-23 (MMAGMKIQLVCMLLLAFSSWSLC) form the signal peptide. Gln151 is modified (pyrrolidone carboxylic acid).

The protein belongs to the neurotensin family. As to quaternary structure, interacts with NTSR1. Interacts with SORT1. Interacts with SORL1. Neurotensin is cleaved and degraded by Angiotensin-converting enzyme (ACE) and neprilysin (MME).

Its subcellular location is the secreted. It is found in the cytoplasmic vesicle. The protein localises to the secretory vesicle. In terms of biological role, neurotensin may play an endocrine or paracrine role in the regulation of fat metabolism. It causes contraction of smooth muscle. The chain is Neurotensin/neuromedin N (NTS) from Homo sapiens (Human).